The primary structure comprises 35 residues: Photosystem II reaction center protein T (35 aa).

A helical transmembrane segment spans residues 3–23 (AFAYTLLMTLVVATLFFAVAF).

Belongs to the PsbT family. As to quaternary structure, PSII is composed of 1 copy each of membrane proteins PsbA, PsbB, PsbC, PsbD, PsbE, PsbF, PsbH, PsbI, PsbJ, PsbK, PsbL, PsbM, PsbT, PsbX, PsbY, Psb30/Ycf12, peripheral proteins PsbO, CyanoQ (PsbQ), PsbU, PsbV and a large number of cofactors. It forms dimeric complexes.

It is found in the cellular thylakoid membrane. Found at the monomer-monomer interface of the photosystem II (PS II) dimer, plays a role in assembly and dimerization of PSII. PSII is a light-driven water plastoquinone oxidoreductase, using light energy to abstract electrons from H(2)O, generating a proton gradient subsequently used for ATP formation. The protein is Photosystem II reaction center protein T of Prochlorococcus marinus (strain MIT 9303).